A 426-amino-acid chain; its full sequence is Serine--tRNA ligase (426 aa).

Threonine 233–glutamate 235 serves as a coordination point for L-serine. Arginine 264 to glutamate 266 serves as a coordination point for ATP. Residue glutamate 287 participates in L-serine binding. Glutamate 351–serine 354 contributes to the ATP binding site. Serine 387 contributes to the L-serine binding site.

Belongs to the class-II aminoacyl-tRNA synthetase family. Type-1 seryl-tRNA synthetase subfamily. In terms of assembly, homodimer. The tRNA molecule binds across the dimer.

Its subcellular location is the cytoplasm. It catalyses the reaction tRNA(Ser) + L-serine + ATP = L-seryl-tRNA(Ser) + AMP + diphosphate + H(+). It carries out the reaction tRNA(Sec) + L-serine + ATP = L-seryl-tRNA(Sec) + AMP + diphosphate + H(+). It functions in the pathway aminoacyl-tRNA biosynthesis; selenocysteinyl-tRNA(Sec) biosynthesis; L-seryl-tRNA(Sec) from L-serine and tRNA(Sec): step 1/1. In terms of biological role, catalyzes the attachment of serine to tRNA(Ser). Is also able to aminoacylate tRNA(Sec) with serine, to form the misacylated tRNA L-seryl-tRNA(Sec), which will be further converted into selenocysteinyl-tRNA(Sec). The sequence is that of Serine--tRNA ligase from Pseudomonas putida (strain ATCC 47054 / DSM 6125 / CFBP 8728 / NCIMB 11950 / KT2440).